The sequence spans 295 residues: Deoxyuridine 5'-triphosphate nucleotidohydrolase (295 aa).

178-180 provides a ligand contact to substrate; the sequence is RSG. Residues 260 to 272 are compositionally biased toward basic and acidic residues; that stretch reads NSVRKHTHEDNPV. Residues 260 to 295 are disordered; the sequence is NSVRKHTHEDNPVHEPNVATASADIRGTKGLGSSGF.

This sequence belongs to the dUTPase family. Requires Mg(2+) as cofactor.

It carries out the reaction dUTP + H2O = dUMP + diphosphate + H(+). Functionally, involved in nucleotide metabolism: produces dUMP, the immediate precursor of thymidine nucleotides and decreases the intracellular concentration of dUTP to avoid uracil incorporation into viral DNA. The chain is Deoxyuridine 5'-triphosphate nucleotidohydrolase from Human herpesvirus 8 type P (isolate GK18) (HHV-8).